Reading from the N-terminus, the 548-residue chain is Probable malate:quinone oxidoreductase (548 aa).

The interval 520-548 (YDRPQAADSTPKPQLKPQPVQKEVADIAL) is disordered. Residues 530-541 (PKPQLKPQPVQK) show a composition bias toward low complexity.

The protein belongs to the MQO family. Requires FAD as cofactor.

It carries out the reaction (S)-malate + a quinone = a quinol + oxaloacetate. It functions in the pathway carbohydrate metabolism; tricarboxylic acid cycle; oxaloacetate from (S)-malate (quinone route): step 1/1. The protein is Probable malate:quinone oxidoreductase of Shigella dysenteriae serotype 1 (strain Sd197).